The chain runs to 107 residues: Iron-binding protein IscA (107 aa).

The Fe cation site is built by cysteine 35, cysteine 99, and cysteine 101.

Belongs to the HesB/IscA family. In terms of assembly, homodimer; may form tetramers and higher multimers. It depends on Fe cation as a cofactor.

Its function is as follows. Is able to transfer iron-sulfur clusters to apo-ferredoxin. Multiple cycles of [2Fe2S] cluster formation and transfer are observed, suggesting that IscA acts catalytically. Recruits intracellular free iron so as to provide iron for the assembly of transient iron-sulfur cluster in IscU in the presence of IscS, L-cysteine and the thioredoxin reductase system TrxA/TrxB. The chain is Iron-binding protein IscA from Cronobacter sakazakii (strain ATCC BAA-894) (Enterobacter sakazakii).